Consider the following 185-residue polypeptide: Large ribosomal subunit protein uL5m (185 aa).

It belongs to the universal ribosomal protein uL5 family.

The protein localises to the mitochondrion. This Brassica napus (Rape) protein is Large ribosomal subunit protein uL5m (RPL5).